We begin with the raw amino-acid sequence, 239 residues long: Protein GrpE (239 aa).

Disordered stretches follow at residues 1–54 and 208–239; these read MIEN…ELKN and SMGP…SEDV. A compositionally biased stretch (polar residues) spans 19–42; it reads QDNALENVSSAQELTTENNELSSQ. A compositionally biased stretch (basic and acidic residues) spans 43 to 53; the sequence is KTEEINTEELK. Residues 228–239 are compositionally biased toward acidic residues; that stretch reads DIDSEENTSEDV.

This sequence belongs to the GrpE family. Homodimer.

Its subcellular location is the cytoplasm. In terms of biological role, participates actively in the response to hyperosmotic and heat shock by preventing the aggregation of stress-denatured proteins, in association with DnaK and GrpE. It is the nucleotide exchange factor for DnaK and may function as a thermosensor. Unfolded proteins bind initially to DnaJ; upon interaction with the DnaJ-bound protein, DnaK hydrolyzes its bound ATP, resulting in the formation of a stable complex. GrpE releases ADP from DnaK; ATP binding to DnaK triggers the release of the substrate protein, thus completing the reaction cycle. Several rounds of ATP-dependent interactions between DnaJ, DnaK and GrpE are required for fully efficient folding. This Prochlorococcus marinus (strain AS9601) protein is Protein GrpE.